Consider the following 1196-residue polypeptide: Major DNA-binding protein (1196 aa).

A zinc finger spans residues 499–512; sequence CNLCTFDTRHACVH. 2 short sequence motifs (required for filament formation) span residues 843 to 844 and 1142 to 1144; these read FW and FNF. The tract at residues 1158–1196 is disordered; it reads GGPGAPGPAFAGRKRAFHGDDPFGEGPPDKKGDLTLDML. The segment at 1170-1196 is required for nuclear localization; sequence RKRAFHGDDPFGEGPPDKKGDLTLDML. A compositionally biased stretch (basic and acidic residues) spans 1174–1196; it reads FHGDDPFGEGPPDKKGDLTLDML.

It belongs to the herpesviridae major DNA-binding protein family. As to quaternary structure, homooligomers. Forms double-helical filaments necessary for the formation of replication compartments within the host nucleus. Interacts with the origin-binding protein. Interacts with the helicase primase complex; this interaction stimulates primer synthesis activity of the helicase-primase complex. Interacts with the DNA polymerase. Interacts with the alkaline exonuclease; this interaction increases its nuclease processivity.

It is found in the host nucleus. Functionally, plays several crucial roles in viral infection. Participates in the opening of the viral DNA origin to initiate replication by interacting with the origin-binding protein. May disrupt loops, hairpins and other secondary structures present on ssDNA to reduce and eliminate pausing of viral DNA polymerase at specific sites during elongation. Promotes viral DNA recombination by performing strand-transfer, characterized by the ability to transfer a DNA strand from a linear duplex to a complementary single-stranded DNA circle. Can also catalyze the renaturation of complementary single strands. Additionally, reorganizes the host cell nucleus, leading to the formation of prereplicative sites and replication compartments. This process is driven by the protein which can form double-helical filaments in the absence of DNA. The protein is Major DNA-binding protein of Homo sapiens (Human).